Consider the following 253-residue polypeptide: 20 kDa chaperonin, chloroplastic (253 aa).

The transit peptide at 1–50 directs the protein to the chloroplast; it reads MAATQLTASPVTMSARSLASLDGLRASSVKFSSLKPGTLRQSQFRRLVVK. Cpn-10 domain regions lie at residues 60 to 153 and 159 to 252; these read TSIK…GILE and DLKP…MAIL. The residue at position 212 (T212) is a Phosphothreonine.

The protein belongs to the GroES chaperonin family. In terms of assembly, homotetramer. Forms stable complexes with CPN60 in the presence of ATP. Interacts with FSD1. Interacts with CLPT1 and CLPT2. Interacts with CHLH. Interacts with SPY. Ubiquitous. Most abundant in leaves and inflorescence. Low levels found in roots.

The protein localises to the plastid. The protein resides in the chloroplast. In terms of biological role, seems to function only as a co-chaperone, along with CPN60, and in certain cases is essential for the discharge of biologically active proteins from CPN60. Required to activate the iron superoxide dismutases (FeSOD). Involved in abscisic acid (ABA) signaling, independently of its co-chaperone role. Acts as a negative regulator of the CHLH-WRKY40 coupled ABA signaling pathway, downstream of CHLH and upstream of WRKY40. The polypeptide is 20 kDa chaperonin, chloroplastic (CPN20) (Arabidopsis thaliana (Mouse-ear cress)).